Reading from the N-terminus, the 297-residue chain is HTH-type transcriptional regulator ArgP (297 aa).

The HTH lysR-type domain maps to 4-60 (PDYRTLQALDAVIRERGFERAAQKLCITQSAVSQRIKQLENMFGQPLLVRTVPPRPT). Residues 21–40 (FERAAQKLCITQSAVSQRIK) constitute a DNA-binding region (H-T-H motif).

The protein belongs to the LysR transcriptional regulatory family. In terms of assembly, homodimer.

Functionally, controls the transcription of genes involved in arginine and lysine metabolism. The sequence is that of HTH-type transcriptional regulator ArgP from Salmonella choleraesuis (strain SC-B67).